Consider the following 492-residue polypeptide: MTLWINGDWITGQGERRRKTNPVSAEILWQGNDANAAQVAEACQAAREAFPRWARQPFAARQAIVEKFAALLEAHKADLTEVIARETGKPRWEAATEVTAMINKIAISIKAYHARTGEQKSELVDGAATLRHRPHGVLAVFGPYNFPGHLPNGHIVPALLAGNTLIFKPSELTPWTGETVIKLWERAGLPAGVLNLVQGGREIGQALSSLDDLDGLLFTGSASTGYQLHRQLSGQPEKILALEMGGNNPLIIEDATNMDAAVHLTLQSAFITAGQRCTCARRLLVKQGAQGDAFLARLVDVAGRLQPGRWDDDPQPFIGGLISAQAAQHVMEAWRQREALGGRTLLAPRKVKEGTSLLTPGIIELTGVADVPDEEVFGPLLNVWRYAHFDEAIRLANNTRFGLSCGLVSTDRAQFEQLLLEARAGIVNWNKPLTGAASTAPFGGVGASGNHRPSAWYAADYCAWPMASLESPELTLPATLSPGLDFSRREAV.

220-225 is an NAD(+) binding site; the sequence is GSASTG. Active-site residues include E243 and C277.

The protein belongs to the aldehyde dehydrogenase family. AstD subfamily.

It catalyses the reaction N-succinyl-L-glutamate 5-semialdehyde + NAD(+) + H2O = N-succinyl-L-glutamate + NADH + 2 H(+). It participates in amino-acid degradation; L-arginine degradation via AST pathway; L-glutamate and succinate from L-arginine: step 4/5. Catalyzes the NAD-dependent reduction of succinylglutamate semialdehyde into succinylglutamate. The sequence is that of N-succinylglutamate 5-semialdehyde dehydrogenase from Salmonella agona (strain SL483).